Consider the following 428-residue polypeptide: Chaperone SurA (428 aa).

A signal peptide spans 1–19 (MNIWKTLLLGMLVTGSAVS). PpiC domains are found at residues 170-268 (SVEY…KIED) and 277-377 (VTEV…EVLD).

The protein resides in the periplasm. The catalysed reaction is [protein]-peptidylproline (omega=180) = [protein]-peptidylproline (omega=0). Its function is as follows. Chaperone involved in the correct folding and assembly of outer membrane proteins. Recognizes specific patterns of aromatic residues and the orientation of their side chains, which are found more frequently in integral outer membrane proteins. May act in both early periplasmic and late outer membrane-associated steps of protein maturation. The polypeptide is Chaperone SurA (Vibrio vulnificus (strain YJ016)).